Reading from the N-terminus, the 81-residue chain is Cytotoxin 5b (81 aa).

A signal peptide spans 1–21; it reads MKTLLLTLLVVTIVCLDLGYT. Cystine bridges form between Cys24–Cys42, Cys35–Cys59, Cys63–Cys74, and Cys75–Cys80.

Belongs to the three-finger toxin family. Short-chain subfamily. Type IA cytotoxin sub-subfamily. As to quaternary structure, monomer in solution; Homodimer and oligomer in the presence of negatively charged lipids forming a pore with a size ranging between 20 and 30 Angstroms. In terms of tissue distribution, expressed by the venom gland.

The protein resides in the secreted. The protein localises to the target cell membrane. In terms of biological role, shows cytolytic activity on many different cells by forming pore in lipid membranes. In vivo, increases heart rate or kills the animal by cardiac arrest. In addition, it binds to heparin with high affinity, interacts with Kv channel-interacting protein 1 (KCNIP1) in a calcium-independent manner, and binds to integrin alpha-V/beta-3 (ITGAV/ITGB3) with moderate affinity. This Naja sputatrix (Malayan spitting cobra) protein is Cytotoxin 5b.